A 327-amino-acid chain; its full sequence is Inactive peptidyl-prolyl cis-trans isomerase FKBP6 (327 aa).

Positions 54-143 (DASVLVKYSG…LFEIELLDFL (90 aa)) constitute a PPIase FKBP-type domain. 3 TPR repeats span residues 171–204 (AATEREFGNYLFRQNRFYDAKVRYKRALLLLRRR), 219–252 (LPVLLNLSFTYLKLDRPTIALCYGEQALIIDQKN), and 253–286 (AKALFRCGQACLLLTEYQKARDFLVRAQKEQPFN).

This sequence belongs to the FKBP6 family. Interacts (via TPR repeats) with HSP90. Interacts with HSP72/HSPA2 and CLTC. Interacts with GAPDH; leading to inhibit GAPDH catalytic activity. As to expression, detected in all tissues examined, with higher expression in testis, heart, skeletal muscle, liver, and kidney.

The protein resides in the cytoplasm. The protein localises to the nucleus. Functionally, has an essential role in spermatogenesis. It is required to repress transposable elements and prevent their mobilization, which is essential for the germline integrity. Acts via the piRNA metabolic process, which mediates the repression of transposable elements during meiosis by forming complexes composed of piRNAs and Piwi proteins and govern the methylation and subsequent repression of transposons. Acts as a co-chaperone via its interaction with HSP90 and is required for the piRNA amplification process, the secondary piRNA biogenesis. May be required together with HSP90 in removal of 16 nucleotide ping-pong by-products from Piwi complexes, possibly facilitating turnover of Piwi complexes. This Homo sapiens (Human) protein is Inactive peptidyl-prolyl cis-trans isomerase FKBP6 (FKBP6).